We begin with the raw amino-acid sequence, 347 residues long: uncharacterized protein (347 aa).

The RING-type zinc-finger motif lies at 5–44; that stretch reads CTICHNTPNRPVRLDCNHEFCYICIKGSIQNDMLNCAVCR. The region spanning 244 to 321 is the WWE domain; the sequence is NVQANFNVAR…NLDAWRQIKR (78 aa).

This is an uncharacterized protein from Caenorhabditis elegans.